Consider the following 852-residue polypeptide: Ubiquitin carboxyl-terminal hydrolase 4 (852 aa).

A Rhodanese domain is found at 172–296 (ASGTVLLVDV…WSNAHPDFCV (125 aa)). Residues 369–393 (RSSSSSSNINERPGSVPPQLSNGST) are disordered. One can recognise a USP domain in the interval 488–849 (VGLVNCGNSC…NAYVLFYHRI (362 aa)). The active-site Nucleophile is Cys497. Catalysis depends on His806, which acts as the Proton acceptor.

Belongs to the peptidase C19 family.

It is found in the cytoplasm. Its subcellular location is the late endosome membrane. The catalysed reaction is Thiol-dependent hydrolysis of ester, thioester, amide, peptide and isopeptide bonds formed by the C-terminal Gly of ubiquitin (a 76-residue protein attached to proteins as an intracellular targeting signal).. With respect to regulation, RFU1 is an inhibitor of deubiquitination activity. In terms of biological role, ubiquitin thioesterase that acts at the late endosome/prevacuolar compartment to recover ubiquitin from ubiquitinated membrane proteins en route to the vacuole. Also removes ubiquitin from soluble proteins targeted to proteasomes. Is essential to maintain a normal level of free ubiquitin. Required for promoting coordination of DNA replication and avoids DNA overreplication. This Eremothecium gossypii (strain ATCC 10895 / CBS 109.51 / FGSC 9923 / NRRL Y-1056) (Yeast) protein is Ubiquitin carboxyl-terminal hydrolase 4 (DOA4).